The chain runs to 896 residues: Translation initiation factor IF-2 (896 aa).

The segment at 49–310 is disordered; the sequence is LKKEHGDTSG…MQQGFDKSAT (262 aa). Polar residues predominate over residues 57–66; that stretch reads SGETEPTRLT. Composition is skewed to basic and acidic residues over residues 101 to 174, 184 to 240, and 250 to 263; these read STIE…KDMN, AKKE…KSAD, and REAE…DEKA. Over residues 284 to 295 the composition is skewed to basic residues; it reads RNQRGRGGKGKL. A tr-type G domain is found at 395–564; it reads GRAPVVTIMG…LLQSEVLELT (170 aa). The interval 404–411 is G1; the sequence is GHVDHGKT. 404-411 serves as a coordination point for GTP; that stretch reads GHVDHGKT. The tract at residues 429-433 is G2; sequence GITQH. Residues 450-453 form a G3 region; sequence DTPG. GTP contacts are provided by residues 450-454 and 504-507; these read DTPGH and NKID. Residues 504-507 form a G4 region; sequence NKID. Residues 540 to 542 form a G5 region; sequence SAK.

This sequence belongs to the TRAFAC class translation factor GTPase superfamily. Classic translation factor GTPase family. IF-2 subfamily.

Its subcellular location is the cytoplasm. One of the essential components for the initiation of protein synthesis. Protects formylmethionyl-tRNA from spontaneous hydrolysis and promotes its binding to the 30S ribosomal subunits. Also involved in the hydrolysis of GTP during the formation of the 70S ribosomal complex. In Vibrio atlanticus (strain LGP32) (Vibrio splendidus (strain Mel32)), this protein is Translation initiation factor IF-2.